The chain runs to 102 residues: Large ribosomal subunit protein bL21 (102 aa).

This sequence belongs to the bacterial ribosomal protein bL21 family. As to quaternary structure, part of the 50S ribosomal subunit. Contacts protein L20.

In terms of biological role, this protein binds to 23S rRNA in the presence of protein L20. The sequence is that of Large ribosomal subunit protein bL21 from Oleidesulfovibrio alaskensis (strain ATCC BAA-1058 / DSM 17464 / G20) (Desulfovibrio alaskensis).